A 730-amino-acid polypeptide reads, in one-letter code: Jacalin-related lectin 5 (730 aa).

One can recognise a Jacalin-type lectin 1 domain in the interval 1-126; that stretch reads MSWDDGKHTK…LNSIDAHFAP (126 aa). The interval 121-450 is disordered; it reads DAHFAPAPPP…GNQWDDGTDH (330 aa). Low complexity-rich tracts occupy residues 138–153, 168–179, 196–207, and 248–261; these read GASG…GSAG, AGGSKPSSGSAG, and TEKN…SSGS. Over residues 275–307 the composition is skewed to polar residues; that stretch reads ETVSNIGDTESNAGGSKSNDGANNGASGIESNA. The segment covering 314–323 has biased composition (gly residues); the sequence is FGAGGTGGIG. Over residues 343–358 the composition is skewed to low complexity; it reads DGASGIGSNDGSTGTN. Polar residues-rich tracts occupy residues 366 to 375 and 388 to 416; these read DSNIEGTENN and IGNS…TGGK. A compositionally biased stretch (low complexity) spans 417–429; sequence ESNTGSESNTNSS. Jacalin-type lectin domains are found at residues 430 to 572 and 584 to 727; these read PQKL…YFVP and PNKV…YFIP.

The protein belongs to the jacalin lectin family.

The chain is Jacalin-related lectin 5 (JAL5) from Arabidopsis thaliana (Mouse-ear cress).